The sequence spans 232 residues: MGPSVLPAWLQPRYRKNVYLFIYYLIQFCGHSWILANMTVRFFSFGKDSMADTFYAIGLVMRVCQSISLLELLHIYIGIESNQLFPRFLQLTERVIILFGVITSQEEVQEKCVVCVLFILWNLLDMVRYTYSMLSVIGTSYAALTWLSQTLWMPIYPLCVLAEAFTIYQSLPYFESFGTNSTVLPFDLSTCFPYVLKLYLMMLFIGMYFTYSHLYTERKDFLRVFSVKQKNV.

Topologically, residues 1 to 19 (MGPSVLPAWLQPRYRKNVY) are cytoplasmic. Residues 20 to 40 (LFIYYLIQFCGHSWILANMTV) traverse the membrane as a helical segment. The Lumenal portion of the chain corresponds to 41-56 (RFFSFGKDSMADTFYA). Residues 57–77 (IGLVMRVCQSISLLELLHIYI) form a helical membrane-spanning segment. The Cytoplasmic segment spans residues 78 to 112 (GIESNQLFPRFLQLTERVIILFGVITSQEEVQEKC). Residues 113-133 (VVCVLFILWNLLDMVRYTYSM) form a helical membrane-spanning segment. Over 134-135 (LS) the chain is Lumenal. A helical transmembrane segment spans residues 136 to 156 (VIGTSYAALTWLSQTLWMPIY). Residue tyrosine 156 is part of the active site. Position 157 (proline 157) is a topological domain, cytoplasmic. A helical transmembrane segment spans residues 158–178 (LCVLAEAFTIYQSLPYFESFG). Residue glutamate 163 is part of the active site. The Lumenal segment spans residues 179 to 189 (TNSTVLPFDLS). Residues 190 to 210 (TCFPYVLKLYLMMLFIGMYFT) traverse the membrane as a helical segment. Residues 211 to 232 (YSHLYTERKDFLRVFSVKQKNV) lie on the Cytoplasmic side of the membrane.

The protein belongs to the very long-chain fatty acids dehydratase HACD family. As to quaternary structure, may interact with enzymes of the ELO family (including ELOVL1); with those enzymes that mediate condensation, the first of the four steps of the reaction cycle responsible for fatty acids elongation, may be part of a larger fatty acids elongase complex.

It localises to the endoplasmic reticulum membrane. The enzyme catalyses a very-long-chain (3R)-3-hydroxyacyl-CoA = a very-long-chain (2E)-enoyl-CoA + H2O. The catalysed reaction is (3R)-hydroxyhexadecanoyl-CoA = (2E)-hexadecenoyl-CoA + H2O. It participates in lipid metabolism; fatty acid biosynthesis. Functionally, catalyzes the third of the four reactions of the long-chain fatty acids elongation cycle. This endoplasmic reticulum-bound enzymatic process, allows the addition of two carbons to the chain of long- and very long-chain fatty acids/VLCFAs per cycle. This enzyme catalyzes the dehydration of the 3-hydroxyacyl-CoA intermediate into trans-2,3-enoyl-CoA, within each cycle of fatty acid elongation. Thereby, it participates in the production of VLCFAs of different chain lengths that are involved in multiple biological processes as precursors of membrane lipids and lipid mediators. This is Very-long-chain (3R)-3-hydroxyacyl-CoA dehydratase 4 from Mus musculus (Mouse).